The following is a 156-amino-acid chain: Small ribosomal subunit protein uS7 (156 aa).

It belongs to the universal ribosomal protein uS7 family. In terms of assembly, part of the 30S ribosomal subunit. Contacts proteins S9 and S11.

Its function is as follows. One of the primary rRNA binding proteins, it binds directly to 16S rRNA where it nucleates assembly of the head domain of the 30S subunit. Is located at the subunit interface close to the decoding center, probably blocks exit of the E-site tRNA. The polypeptide is Small ribosomal subunit protein uS7 (Clostridium botulinum (strain Alaska E43 / Type E3)).